The sequence spans 663 residues: UvrABC system protein B (663 aa).

Residues 1–10 show a composition bias toward basic and acidic residues; it reads MIDKRDDKPF. A disordered region spans residues 1–23; it reads MIDKRDDKPFKLKSKYKPSGDQP. The region spanning 31–271 is the Helicase ATP-binding domain; the sequence is DNIEGGEKAQ…EQSIAKIQAE (241 aa). 44-51 contributes to the ATP binding site; it reads GATGTGKT. A Beta-hairpin motif is present at residues 97 to 120; the sequence is YYDYYQPEAYVPSSDTYIEKDSSV. In terms of domain architecture, Helicase C-terminal spans 435–601; it reads QMDDLLGEIN…TIKKDIRGLI (167 aa). Residues 627–662 form the UVR domain; sequence KEAINALQKQMQEAAELLDFELAAQMRDLILELKLM.

It belongs to the UvrB family. As to quaternary structure, forms a heterotetramer with UvrA during the search for lesions. Interacts with UvrC in an incision complex.

The protein resides in the cytoplasm. Its function is as follows. The UvrABC repair system catalyzes the recognition and processing of DNA lesions. A damage recognition complex composed of 2 UvrA and 2 UvrB subunits scans DNA for abnormalities. Upon binding of the UvrA(2)B(2) complex to a putative damaged site, the DNA wraps around one UvrB monomer. DNA wrap is dependent on ATP binding by UvrB and probably causes local melting of the DNA helix, facilitating insertion of UvrB beta-hairpin between the DNA strands. Then UvrB probes one DNA strand for the presence of a lesion. If a lesion is found the UvrA subunits dissociate and the UvrB-DNA preincision complex is formed. This complex is subsequently bound by UvrC and the second UvrB is released. If no lesion is found, the DNA wraps around the other UvrB subunit that will check the other stand for damage. The polypeptide is UvrABC system protein B (Streptococcus pyogenes serotype M4 (strain MGAS10750)).